The primary structure comprises 445 residues: Phosphoglucosamine mutase (445 aa).

Catalysis depends on Ser99, which acts as the Phosphoserine intermediate. 4 residues coordinate Mg(2+): Ser99, Asp242, Asp244, and Asp246. Ser99 is modified (phosphoserine).

Belongs to the phosphohexose mutase family. Requires Mg(2+) as cofactor. Activated by phosphorylation.

The enzyme catalyses alpha-D-glucosamine 1-phosphate = D-glucosamine 6-phosphate. Functionally, catalyzes the conversion of glucosamine-6-phosphate to glucosamine-1-phosphate. The polypeptide is Phosphoglucosamine mutase (Campylobacter jejuni subsp. jejuni serotype O:2 (strain ATCC 700819 / NCTC 11168)).